We begin with the raw amino-acid sequence, 329 residues long: Ig gamma-2 chain C region (329 aa).

3 disulfides stabilise this stretch: C28-C79, C142-C202, and C248-C308. N178 carries N-linked (GlcNAc...) asparagine glycosylation.

It localises to the secreted. This is Ig gamma-2 chain C region from Cavia porcellus (Guinea pig).